Reading from the N-terminus, the 55-residue chain is Large ribosomal subunit protein bL33B (55 aa).

Belongs to the bacterial ribosomal protein bL33 family.

This Salinispora tropica (strain ATCC BAA-916 / DSM 44818 / JCM 13857 / NBRC 105044 / CNB-440) protein is Large ribosomal subunit protein bL33B.